A 455-amino-acid chain; its full sequence is MSKKVMSVVILAAGKGTRMCSNLPKVLHLLAGKPMVQHVINTANQLDCTRIHLVYGHGGALLKEKLNNEKLNWILQEEQWGTGHALQKAIPYFSEDENILVLYGDVPLIEVDTLNRLLLAKPHGGISLLTARVDNPRGYGRIIRKNDDISGIVECKEATEIQKKINEINTGIMAINSSDLKKWLKQLKNDNHQNEFYLTDIIKMAYQENRKIIGIQPAHLNEIEGINDGLQLARLERLFQKQQAEKLLLSGVRILDPARFDLRGQLICGSDVVIDTNVIIEGEVTLGDRVQIRTGCLLKNCRIGDDSQINAYTVIEGSFLDKNCVVGPFARLRPGSELSEKVHVGNFVEIKKSSLGQGSKAGHLSYLGDAEIGSGVNIGAGTITCNYDGVNKHKTQIGDYVFVGSHTQFIAPVTVGDHATIGAGTTVTLNVPENELGLSRVKQKNIQGWKRPKKT.

Residues 1 to 229 (MSKKVMSVVI…LNEIEGINDG (229 aa)) form a pyrophosphorylase region. UDP-N-acetyl-alpha-D-glucosamine contacts are provided by residues 11–14 (LAAG), Lys25, Gln76, 81–82 (GT), 103–105 (YGD), Gly140, Glu154, Asn169, and Asn227. Mg(2+) is bound at residue Asp105. A Mg(2+)-binding site is contributed by Asn227. The interval 230–250 (LQLARLERLFQKQQAEKLLLS) is linker. Residues 251 to 455 (GVRILDPARF…IQGWKRPKKT (205 aa)) are N-acetyltransferase. 2 residues coordinate UDP-N-acetyl-alpha-D-glucosamine: Arg333 and Lys351. His363 (proton acceptor) is an active-site residue. Residues Tyr366 and Asn377 each coordinate UDP-N-acetyl-alpha-D-glucosamine. Acetyl-CoA is bound by residues Ala380, 386–387 (NY), Ser405, Ala423, and Arg440.

In the N-terminal section; belongs to the N-acetylglucosamine-1-phosphate uridyltransferase family. This sequence in the C-terminal section; belongs to the transferase hexapeptide repeat family. In terms of assembly, homotrimer. Mg(2+) is required as a cofactor.

The protein localises to the cytoplasm. It catalyses the reaction alpha-D-glucosamine 1-phosphate + acetyl-CoA = N-acetyl-alpha-D-glucosamine 1-phosphate + CoA + H(+). The catalysed reaction is N-acetyl-alpha-D-glucosamine 1-phosphate + UTP + H(+) = UDP-N-acetyl-alpha-D-glucosamine + diphosphate. Its pathway is nucleotide-sugar biosynthesis; UDP-N-acetyl-alpha-D-glucosamine biosynthesis; N-acetyl-alpha-D-glucosamine 1-phosphate from alpha-D-glucosamine 6-phosphate (route II): step 2/2. It participates in nucleotide-sugar biosynthesis; UDP-N-acetyl-alpha-D-glucosamine biosynthesis; UDP-N-acetyl-alpha-D-glucosamine from N-acetyl-alpha-D-glucosamine 1-phosphate: step 1/1. It functions in the pathway bacterial outer membrane biogenesis; LPS lipid A biosynthesis. Functionally, catalyzes the last two sequential reactions in the de novo biosynthetic pathway for UDP-N-acetylglucosamine (UDP-GlcNAc). The C-terminal domain catalyzes the transfer of acetyl group from acetyl coenzyme A to glucosamine-1-phosphate (GlcN-1-P) to produce N-acetylglucosamine-1-phosphate (GlcNAc-1-P), which is converted into UDP-GlcNAc by the transfer of uridine 5-monophosphate (from uridine 5-triphosphate), a reaction catalyzed by the N-terminal domain. This chain is Bifunctional protein GlmU, found in Hamiltonella defensa subsp. Acyrthosiphon pisum (strain 5AT).